Reading from the N-terminus, the 339-residue chain is MAILVTGGAGYIGSHTCVELLNSGYEIVVLDNLSNSSAEALNRVKEITGKDLTFYEADLLDREAVDSVFAENEIEAVIHFAGLKAVGESVAIPLKYYHNNLTGTFILCEAMEKYGVKKIVFSSSATVYGVPETSPITEDFPLGATNPYGQTKLMLEQILRDLHTADNEWSVALLRYFNPFGAHPSGRIGEDPNGIPNNLMPYVAQVAVGKLEQLSVFGNDYPTKDGTGVRDYIHVVDLAEGHVKALEKVLNSTGADAYNLGTGTGYSVLEMVKAFEKVSGKEVPYRFADRRPGDIATCFADPAKAKRELGWEAKRGLEEMCADSWRWQSSNVNGYKSAE.

Residues 10–12 (GYI), 31–35 (DNLSN), 58–59 (DL), F80, and K84 contribute to the NAD(+) site. 124–126 (SAT) contributes to the substrate binding site. Catalysis depends on Y148, which acts as the Proton acceptor. K152 and Y176 together coordinate NAD(+). Substrate is bound by residues 176–178 (YFN), 197–199 (NNL), R230, and 291–294 (RPGD).

This sequence belongs to the NAD(P)-dependent epimerase/dehydratase family. NAD(+) serves as cofactor.

It catalyses the reaction UDP-alpha-D-glucose = UDP-alpha-D-galactose. The enzyme catalyses UDP-N-acetyl-alpha-D-glucosamine = UDP-N-acetyl-alpha-D-galactosamine. Its pathway is cell wall biogenesis; teichoic acid biosynthesis. Functionally, catalyzes two distinct but analogous reactions: the reversible epimerization of UDP-glucose to UDP-galactose and the reversible epimerization of UDP-N-acetylglucosamine to UDP-N-acetylgalactosamine. The enzyme is more efficient in catalyzing the interconversion between unacetylated than between corresponding N-acetylated substrates. Essential for growth in media containing either glucose or galactose. May protect the cell from the toxic effects of galactose and glucose or derivatives of both sugars. Involved in the biosynthesis of teichoic acids via the formation of UDP-N-acetylgalactosamine. Influences cell division. This is UDP-glucose 4-epimerase from Bacillus subtilis (strain 168).